Consider the following 1259-residue polypeptide: Ankyrin repeat and sterile alpha motif domain-containing protein 1B (1259 aa).

ANK repeat units lie at residues 2–31 (GKDQ…GGIL), 58–87 (SGYT…STNV), 91–120 (KGYF…SHSR), 127–156 (ENET…DPTI), 160–189 (KLET…NLMS), 193–222 (RKHT…DVSC), and 225–254 (EKGS…DANI). Positions 298–325 (HAQEDTAQETHLSSPAESPQKTKSETVT) are disordered. Residues 306–325 (ETHLSSPAESPQKTKSETVT) are compositionally biased toward polar residues. Phosphoserine occurs at positions 310, 311, 315, 353, and 364. 4 disordered regions span residues 367–401 (ELGK…SCGP), 490–513 (PGTS…SPDT), 556–614 (CTSF…GSSP), and 631–661 (TCED…EPSV). Over residues 371 to 384 (NGSQSVRTSSTINL) the composition is skewed to polar residues. The residue at position 503 (T503) is a Phosphothreonine. A phosphoserine mark is found at S507 and S510. Over residues 556–574 (CTSFTSSPAASPPTSSVET) the composition is skewed to low complexity. Residues 575–587 (TEVKNEGAEHADD) are compositionally biased toward basic and acidic residues. S738 carries the phosphoserine modification. Residues 753–776 (VNWSKSSTAERSSKDNSERTPSFT) are disordered. The residue at position 772 (T772) is a Phosphothreonine. Position 774 is a phosphoserine (S774). SAM domains follow at residues 809-875 (CPVQ…LPKM) and 883-948 (YHPT…RLHD). Residue Y900 is modified to Phosphotyrosine. Residue H934 is a short sequence motif, nuclear localization signal. Residues 943 to 988 (GDRLHDDPPQKPPRSITLREPSGNHTPPQLSPSLSQSTYTTGGSLD) are disordered. Residues 968–983 (TPPQLSPSLSQSTYTT) are compositionally biased toward low complexity. S973 carries the post-translational modification Phosphoserine. Y1006 carries the phosphotyrosine modification. The PID domain occupies 1055–1212 (IFQSCDYKAF…SFENKPSKPI (158 aa)). The tract at residues 1196 to 1216 (HSSTLPESFENKPSKPIPKPR) is disordered.

Interacts with EPHA8. Isoform 2 interacts with COIL.

It is found in the cytoplasm. The protein resides in the nucleus. It localises to the postsynaptic density. Its subcellular location is the cell projection. The protein localises to the dendritic spine. Its function is as follows. Isoform 2 may participate in the regulation of nucleoplasmic coilin protein interactions in neuronal and transformed cells. This Mus musculus (Mouse) protein is Ankyrin repeat and sterile alpha motif domain-containing protein 1B (Anks1b).